Here is a 195-residue protein sequence, read N- to C-terminus: Transcription factor 15 (195 aa).

The disordered stretch occupies residues 44–65; the sequence is LEAARRGPGPGSGRRASNGAGP. Positions 56 to 65 are enriched in low complexity; sequence GRRASNGAGP. A Phosphoserine modification is found at Ser60. A bHLH domain is found at 70-122; sequence RQRQAANARERDRTQSVNTAFTALRTLIPTEPVDRKLSKIETLRLASSYIAHL.

As to quaternary structure, heterodimer; efficient DNA binding requires dimerization with another bHLH protein, such as TCF3/E12. Interacts with MEOX2. As to expression, expressed in heart and skeletal muscle. Specifically expressed in a subpopulation of embryonic stem cells (ESCs), that are still undifferentiated but primed for ifferentiation. Expressed in hematopoietic stem cells (HSCs).

It localises to the nucleus. Functionally, early transcription factor that plays a key role in somitogenesis, paraxial mesoderm development and regulation of stem cell pluripotency. Essential for the mesenchymal to epithelial transition associated with somite formation. Required for somite morphogenesis, thereby regulating patterning of the axial skeleton and skeletal muscles. Required for proper localization of somite epithelium markers during the mesenchymal to epithelial transition. Also plays a key role in regulation of stem cell pluripotency. Promotes pluripotency exit of embryonic stem cells (ESCs) by priming ESCs for differentiation. Acts as a key regulator of self-renewal of hematopoietic stem cells (HSCs) by mediating HSCs quiescence and long-term self-renewal. Together with MEOX2, regulates transcription in heart endothelial cells to regulate fatty acid transport across heart endothelial cells. Acts by forming a heterodimer with another helix-loop-helix (bHLH) protein, such as TCF3/E12, that binds DNA on E-box motifs (5'-CANNTG-3') and activates transcription of target genes. This chain is Transcription factor 15, found in Mus musculus (Mouse).